The following is a 230-amino-acid chain: Intracellular hyphae protein 1 (230 aa).

The N-terminal stretch at 1–18 (MQTSFVALLAVAASLASA) is a signal peptide. Residues 20-102 (PHGGNSYEAS…KNNTLPVPTC (83 aa)) are disordered. 10 consecutive repeat copies span residues 30–33 (LPEP), 36–39 (LPEP), 42–45 (LPEP), 46–49 (VEGP), 50–53 (YKPK), 57–60 (LPEP), 65–68 (YKPK), 76–79 (VEGP), 80–83 (YKPK), and 84–87 (LPEP). The interval 30–87 (LPEPTNLPEPTKLPEPVEGPYKPKPPILPEPIKDNYKPKTPILPEHVEGPYKPKLPEP) is 5 X 4 AA repeats of L-P-E-P. The segment at 46-87 (VEGPYKPKPPILPEPIKDNYKPKTPILPEHVEGPYKPKLPEP) is 2 X 4 AA repeats of V-E-G-P. Residues 50 to 83 (YKPKPPILPEPIKDNYKPKTPILPEHVEGPYKPK) form a 3 X 4 AA repeats of Y-K-P-K region. The segment covering 74–84 (EHVEGPYKPKL) has biased composition (basic and acidic residues). An N-linked (GlcNAc...) asparagine glycan is attached at Asn-94. One can recognise a LysM 1 domain in the interval 108-152 (KTHKVKSGESLTTIAEKYDTGICNIAKLNNLADPNFVDLNQDLQI). N-linked (GlcNAc...) asparagine glycosylation is present at Asn-161. A LysM 2 domain is found at 183–227 (DIYSVVSGDTLTSIAQALQITLQSLKDANPGVVPEHLNVGQKLNV).

Forms a multimeric structure. In terms of processing, N-glycosylated and may be O-glycosylated. In terms of tissue distribution, expressed in penetration hyphae, infection vesicles and primary hyphae (intracellular hyphae).

Its subcellular location is the secreted. The protein resides in the cell wall. Functionally, may have roles in host-pathogen interaction, including establishment and maintenance of biotrophy, prevention of host recognition of the fungus and a barrier to host defense molecules. The chain is Intracellular hyphae protein 1 (CIH1) from Colletotrichum lindemuthianum (Bean anthracnose fungus).